Consider the following 429-residue polypeptide: Adenylosuccinate synthetase (429 aa).

GTP contacts are provided by residues 12 to 18 and 40 to 42; these read GDEGKGK and GHT. Residue D13 is the Proton acceptor of the active site. D13 and G40 together coordinate Mg(2+). Residues 13 to 16, 38 to 41, T128, R142, Q223, T238, and R302 each bind IMP; these read DEGK and NAGH. H41 functions as the Proton donor in the catalytic mechanism. Position 298-304 (298-304) interacts with substrate; sequence TVTGRPR. GTP is bound by residues R304, 330–332, and 412–414; these read LLD and SVG.

Belongs to the adenylosuccinate synthetase family. In terms of assembly, homodimer. Mg(2+) serves as cofactor.

The protein resides in the cytoplasm. The catalysed reaction is IMP + L-aspartate + GTP = N(6)-(1,2-dicarboxyethyl)-AMP + GDP + phosphate + 2 H(+). It functions in the pathway purine metabolism; AMP biosynthesis via de novo pathway; AMP from IMP: step 1/2. Its function is as follows. Plays an important role in the de novo pathway of purine nucleotide biosynthesis. Catalyzes the first committed step in the biosynthesis of AMP from IMP. The polypeptide is Adenylosuccinate synthetase (Lactobacillus helveticus (strain DPC 4571)).